The primary structure comprises 210 residues: Ras-related protein Rab-2-B (210 aa).

13-21 (GDTGVGKSC) serves as a coordination point for GTP. An Effector region motif is present at residues 35–43 (HDLTIGVEF). Residues 61-65 (DTAGQ), 119-122 (NKCD), and 149-151 (SAK) each bind GTP. 2 S-geranylgeranyl cysteine lipidation sites follow: cysteine 208 and cysteine 209.

Belongs to the small GTPase superfamily. Rab family.

Its subcellular location is the endoplasmic reticulum membrane. It is found in the golgi apparatus membrane. Its function is as follows. Protein transport. Probably involved in vesicular traffic. This is Ras-related protein Rab-2-B (RAB2B) from Zea mays (Maize).